The primary structure comprises 321 residues: MSKPIQMERGVKYRDADKMALIPIKTVAVERQEILRKPSWMKIKLPADSTRIQGIKVAMRKNGLHSVCEEASCPNLAECFNHGTATFMILGAICTRRCPFCDVAHGRPVTPDANEPEKLAQTIADMGLRYVVVTSVDRDDLRDGGAQHFADCISAIRAKNPNIRIETLVPDFRGRMDRALEIINAAPPDVFNHNLENVPRLYRQVRPGADYHWSLKLLENFKVANPQLPTKSGLMVGLGETNAEIVDVMRDLCRHGVTMLTLGQYLQPSRHHLPVKRYVSPQEFDEMKQEALAMGFTHAACGPFVRSSYHADLQAKGIEVK.

[4Fe-4S] cluster-binding residues include cysteine 68, cysteine 73, cysteine 79, cysteine 94, cysteine 98, cysteine 101, and serine 308. A Radical SAM core domain is found at 80 to 297 (FNHGTATFMI…KQEALAMGFT (218 aa)).

It belongs to the radical SAM superfamily. Lipoyl synthase family. The cofactor is [4Fe-4S] cluster.

The protein localises to the cytoplasm. It carries out the reaction [[Fe-S] cluster scaffold protein carrying a second [4Fe-4S](2+) cluster] + N(6)-octanoyl-L-lysyl-[protein] + 2 oxidized [2Fe-2S]-[ferredoxin] + 2 S-adenosyl-L-methionine + 4 H(+) = [[Fe-S] cluster scaffold protein] + N(6)-[(R)-dihydrolipoyl]-L-lysyl-[protein] + 4 Fe(3+) + 2 hydrogen sulfide + 2 5'-deoxyadenosine + 2 L-methionine + 2 reduced [2Fe-2S]-[ferredoxin]. Its pathway is protein modification; protein lipoylation via endogenous pathway; protein N(6)-(lipoyl)lysine from octanoyl-[acyl-carrier-protein]: step 2/2. Catalyzes the radical-mediated insertion of two sulfur atoms into the C-6 and C-8 positions of the octanoyl moiety bound to the lipoyl domains of lipoate-dependent enzymes, thereby converting the octanoylated domains into lipoylated derivatives. This Sodalis glossinidius (strain morsitans) protein is Lipoyl synthase.